Here is a 77-residue protein sequence, read N- to C-terminus: Protein NS4 (77 aa).

It localises to the host cytoplasm. Its subcellular location is the host nucleus. The protein localises to the host nucleolus. Functionally, may function as a nucleic acid binding protein that modulates transcription of genes participating in the IFN response. This chain is Protein NS4 (Segment-9), found in Antilocapra americana (Pronghorn).